A 639-amino-acid polypeptide reads, in one-letter code: Extracellular metalloproteinase 9 (639 aa).

An N-terminal signal peptide occupies residues 1–19; the sequence is MHGLLLAAGLLSLPLRALG. A propeptide spanning residues 20 to 250 is cleaved from the precursor; that stretch reads HPNPNPQMHT…IHGVVDYVAD (231 aa). The N-linked (GlcNAc...) asparagine glycan is linked to asparagine 278. Positions 293–312 are disordered; the sequence is PTTRGNNGIAQDNPSGGNQY. Histidine 434 lines the Zn(2+) pocket. Residue glutamate 435 is part of the active site. Histidine 438 contacts Zn(2+).

The protein belongs to the peptidase M36 family. Zn(2+) serves as cofactor.

The protein resides in the secreted. In terms of biological role, secreted metalloproteinase that allows assimilation of proteinaceous substrates and probably acts as a virulence factor. This chain is Extracellular metalloproteinase 9 (MEP9), found in Coccidioides posadasii (strain C735) (Valley fever fungus).